The primary structure comprises 256 residues: UPF0259 membrane protein plu2479 (256 aa).

5 helical membrane passes run 23 to 43 (TLTL…LFIP), 89 to 109 (IFSS…LVAA), 132 to 152 (LFLL…LMLV), 192 to 212 (LLVP…FIID), and 221 to 241 (MAGI…LIYL).

Belongs to the UPF0259 family.

It localises to the cell inner membrane. This Photorhabdus laumondii subsp. laumondii (strain DSM 15139 / CIP 105565 / TT01) (Photorhabdus luminescens subsp. laumondii) protein is UPF0259 membrane protein plu2479.